Here is a 118-residue protein sequence, read N- to C-terminus: Small ribosomal subunit protein uS13 (118 aa).

The interval 94–118 (GLPVRGQRTKTNARTRKGPRKPIKK) is disordered.

It belongs to the universal ribosomal protein uS13 family. As to quaternary structure, part of the 30S ribosomal subunit. Forms a loose heterodimer with protein S19. Forms two bridges to the 50S subunit in the 70S ribosome.

In terms of biological role, located at the top of the head of the 30S subunit, it contacts several helices of the 16S rRNA. In the 70S ribosome it contacts the 23S rRNA (bridge B1a) and protein L5 of the 50S subunit (bridge B1b), connecting the 2 subunits; these bridges are implicated in subunit movement. Contacts the tRNAs in the A and P-sites. This Haemophilus ducreyi (strain 35000HP / ATCC 700724) protein is Small ribosomal subunit protein uS13.